The following is a 111-amino-acid chain: Large ribosomal subunit protein uL24 (111 aa).

The protein belongs to the universal ribosomal protein uL24 family. In terms of assembly, part of the 50S ribosomal subunit.

Its function is as follows. One of two assembly initiator proteins, it binds directly to the 5'-end of the 23S rRNA, where it nucleates assembly of the 50S subunit. In terms of biological role, one of the proteins that surrounds the polypeptide exit tunnel on the outside of the subunit. In Cytophaga hutchinsonii (strain ATCC 33406 / DSM 1761 / CIP 103989 / NBRC 15051 / NCIMB 9469 / D465), this protein is Large ribosomal subunit protein uL24.